Here is a 161-residue protein sequence, read N- to C-terminus: Small ribosomal subunit protein uS9 (161 aa).

Belongs to the universal ribosomal protein uS9 family.

This chain is Small ribosomal subunit protein uS9, found in Bartonella henselae (strain ATCC 49882 / DSM 28221 / CCUG 30454 / Houston 1) (Rochalimaea henselae).